Consider the following 70-residue polypeptide: DNA gyrase inhibitor YacG (70 aa).

4 residues coordinate Zn(2+): Cys-21, Cys-24, Cys-36, and Cys-40.

The protein belongs to the DNA gyrase inhibitor YacG family. As to quaternary structure, interacts with GyrB. The cofactor is Zn(2+).

Functionally, inhibits all the catalytic activities of DNA gyrase by preventing its interaction with DNA. Acts by binding directly to the C-terminal domain of GyrB, which probably disrupts DNA binding by the gyrase. This Rhizobium meliloti (strain 1021) (Ensifer meliloti) protein is DNA gyrase inhibitor YacG.